We begin with the raw amino-acid sequence, 468 residues long: Argininosuccinate lyase (468 aa).

This sequence belongs to the lyase 1 family. Argininosuccinate lyase subfamily.

It localises to the cytoplasm. The catalysed reaction is 2-(N(omega)-L-arginino)succinate = fumarate + L-arginine. It participates in amino-acid biosynthesis; L-arginine biosynthesis; L-arginine from L-ornithine and carbamoyl phosphate: step 3/3. The chain is Argininosuccinate lyase from Hahella chejuensis (strain KCTC 2396).